Consider the following 253-residue polypeptide: Proteasome subunit alpha (253 aa).

The disordered stretch occupies residues 229 to 253 (ADESQSYIDDIEDAADDSDDDDDEE). Residues 237–253 (DDIEDAADDSDDDDDEE) show a composition bias toward acidic residues.

Belongs to the peptidase T1A family. The 20S proteasome core is composed of 14 alpha and 14 beta subunits that assemble into four stacked heptameric rings, resulting in a barrel-shaped structure. The two inner rings, each composed of seven catalytic beta subunits, are sandwiched by two outer rings, each composed of seven alpha subunits. The catalytic chamber with the active sites is on the inside of the barrel. Has a gated structure, the ends of the cylinder being occluded by the N-termini of the alpha-subunits. Is capped at one or both ends by the proteasome regulatory ATPase, PAN.

It is found in the cytoplasm. The formation of the proteasomal ATPase PAN-20S proteasome complex, via the docking of the C-termini of PAN into the intersubunit pockets in the alpha-rings, triggers opening of the gate for substrate entry. Interconversion between the open-gate and close-gate conformations leads to a dynamic regulation of the 20S proteasome proteolysis activity. Functionally, component of the proteasome core, a large protease complex with broad specificity involved in protein degradation. The sequence is that of Proteasome subunit alpha from Halobacterium salinarum (strain ATCC 29341 / DSM 671 / R1).